The primary structure comprises 422 residues: Tyrosine--tRNA ligase (422 aa).

Y35 is a binding site for L-tyrosine. The 'HIGH' region motif lies at 40–49 (PTAASLHVGH). 2 residues coordinate L-tyrosine: Y169 and Q173. The short motif at 229 to 233 (KFGKT) is the 'KMSKS' region element. K232 lines the ATP pocket. One can recognise an S4 RNA-binding domain in the interval 352 to 418 (VRLAQLFADT…GKKSLASVAV (67 aa)).

It belongs to the class-I aminoacyl-tRNA synthetase family. TyrS type 1 subfamily. Homodimer.

The protein localises to the cytoplasm. It catalyses the reaction tRNA(Tyr) + L-tyrosine + ATP = L-tyrosyl-tRNA(Tyr) + AMP + diphosphate + H(+). Functionally, catalyzes the attachment of tyrosine to tRNA(Tyr) in a two-step reaction: tyrosine is first activated by ATP to form Tyr-AMP and then transferred to the acceptor end of tRNA(Tyr). The sequence is that of Tyrosine--tRNA ligase from Kineococcus radiotolerans (strain ATCC BAA-149 / DSM 14245 / SRS30216).